The chain runs to 264 residues: Acyl-[acyl-carrier-protein]--UDP-N-acetylglucosamine O-acyltransferase (264 aa).

It belongs to the transferase hexapeptide repeat family. LpxA subfamily. As to quaternary structure, homotrimer.

The protein localises to the cytoplasm. The catalysed reaction is a (3R)-hydroxyacyl-[ACP] + UDP-N-acetyl-alpha-D-glucosamine = a UDP-3-O-[(3R)-3-hydroxyacyl]-N-acetyl-alpha-D-glucosamine + holo-[ACP]. The protein operates within glycolipid biosynthesis; lipid IV(A) biosynthesis; lipid IV(A) from (3R)-3-hydroxytetradecanoyl-[acyl-carrier-protein] and UDP-N-acetyl-alpha-D-glucosamine: step 1/6. Functionally, involved in the biosynthesis of lipid A, a phosphorylated glycolipid that anchors the lipopolysaccharide to the outer membrane of the cell. This chain is Acyl-[acyl-carrier-protein]--UDP-N-acetylglucosamine O-acyltransferase, found in Actinobacillus pleuropneumoniae serotype 7 (strain AP76).